The primary structure comprises 118 residues: Large ribosomal subunit protein bL20 (118 aa).

The protein belongs to the bacterial ribosomal protein bL20 family.

Functionally, binds directly to 23S ribosomal RNA and is necessary for the in vitro assembly process of the 50S ribosomal subunit. It is not involved in the protein synthesizing functions of that subunit. The sequence is that of Large ribosomal subunit protein bL20 from Azotobacter vinelandii.